A 147-amino-acid chain; its full sequence is UPF0047 protein sll1880 (147 aa).

This sequence belongs to the UPF0047 family.

The chain is UPF0047 protein sll1880 from Synechocystis sp. (strain ATCC 27184 / PCC 6803 / Kazusa).